Reading from the N-terminus, the 400-residue chain is Endophilin-B2 (400 aa).

Met1 bears the N-acetylmethionine mark. The membrane-binding amphipathic helix stretch occupies residues 1–27 (MDFNMKKLASDAGIFFTRAVQFTEEKF). Ser10 is subject to Phosphoserine. Residues 24-287 (EEKFGQAEKT…LGSSQGAIFP (264 aa)) enclose the BAR domain. Residues 205-234 (SASALWNDEVDKAEQELRVAQTEFDRQAEV) adopt a coiled-coil conformation. An SH3 domain is found at 340–400 (SGTRKARVLY…VPVTYLELLS (61 aa)). Ser400 carries the phosphoserine modification.

Belongs to the endophilin family. Homodimer, and heterodimer with SH3GLB1.

The protein resides in the cytoplasm. The polypeptide is Endophilin-B2 (Sh3glb2) (Mus musculus (Mouse)).